A 506-amino-acid chain; its full sequence is Dipeptide and tripeptide permease A (506 aa).

Residues methionine 1–arginine 36 are Cytoplasmic-facing. Residues phenylalanine 37–serine 57 form a helical membrane-spanning segment. At glutamate 58–serine 61 the chain is on the periplasmic side. A helical membrane pass occupies residues isoleucine 62–leucine 82. Topologically, residues glycine 83–arginine 91 are cytoplasmic. Transmembrane regions (helical) follow at residues valine 92 to histidine 112 and glutamate 113 to alanine 133. Topologically, residues asparagine 134–threonine 155 are cytoplasmic. A helical membrane pass occupies residues methionine 156–alanine 176. Residues alanine 177–glycine 180 are Periplasmic-facing. The helical transmembrane segment at tryptophan 181–valine 201 threads the bilayer. Residues cysteine 202–lysine 222 lie on the Cytoplasmic side of the membrane. The chain crosses the membrane as a helical span at residues leucine 223–asparagine 243. At glutamine 244 to arginine 248 the chain is on the periplasmic side. A helical transmembrane segment spans residues tryptophan 249 to leucine 269. The Cytoplasmic portion of the chain corresponds to histidine 270–lysine 276. A helical membrane pass occupies residues methionine 277–methionine 297. Over proline 298–glutamine 322 the chain is Periplasmic. A helical transmembrane segment spans residues tyrosine 323–asparagine 343. Over lysine 344 to lysine 354 the chain is Cytoplasmic. The chain crosses the membrane as a helical span at residues phenylalanine 355–phenylalanine 375. Topologically, residues alanine 376 to asparagine 385 are periplasmic. The chain crosses the membrane as a helical span at residues tryptophan 386 to leucine 406. Topologically, residues alanine 407–arginine 416 are cytoplasmic. A helical transmembrane segment spans residues leucine 417–glycine 437. Residues lysine 438–histidine 461 lie on the Periplasmic side of the membrane. Residues valine 462–proline 482 traverse the membrane as a helical segment. Residues lysine 483–asparagine 506 are Cytoplasmic-facing.

The protein belongs to the major facilitator superfamily. Proton-dependent oligopeptide transporter (POT/PTR) (TC 2.A.17) family. DtpA subfamily.

It is found in the cell inner membrane. Its function is as follows. Proton-dependent permease that transports di- and tripeptides. The polypeptide is Dipeptide and tripeptide permease A (Serratia proteamaculans (strain 568)).